The sequence spans 425 residues: Serine--tRNA ligase (425 aa).

233–235 (TAE) is an L-serine binding site. Residue 264–266 (RRE) participates in ATP binding. E287 contributes to the L-serine binding site. 351-354 (EVSS) is a binding site for ATP. S386 lines the L-serine pocket.

It belongs to the class-II aminoacyl-tRNA synthetase family. Type-1 seryl-tRNA synthetase subfamily. Homodimer. The tRNA molecule binds across the dimer.

It is found in the cytoplasm. The catalysed reaction is tRNA(Ser) + L-serine + ATP = L-seryl-tRNA(Ser) + AMP + diphosphate + H(+). It catalyses the reaction tRNA(Sec) + L-serine + ATP = L-seryl-tRNA(Sec) + AMP + diphosphate + H(+). It functions in the pathway aminoacyl-tRNA biosynthesis; selenocysteinyl-tRNA(Sec) biosynthesis; L-seryl-tRNA(Sec) from L-serine and tRNA(Sec): step 1/1. Catalyzes the attachment of serine to tRNA(Ser). Is also able to aminoacylate tRNA(Sec) with serine, to form the misacylated tRNA L-seryl-tRNA(Sec), which will be further converted into selenocysteinyl-tRNA(Sec). The protein is Serine--tRNA ligase of Thermosipho melanesiensis (strain DSM 12029 / CIP 104789 / BI429).